The following is a 65-amino-acid chain: Small ribosomal subunit protein bS21B (65 aa).

It belongs to the bacterial ribosomal protein bS21 family.

The protein is Small ribosomal subunit protein bS21B of Francisella tularensis subsp. holarctica (strain LVS).